We begin with the raw amino-acid sequence, 274 residues long: Enoyl-CoA isomerase/hydratase fer4 (274 aa).

Substrate contacts are provided by residues Ala77 to Leu81 and Gly124. Residues Ala79–Leu109 adopt a coiled-coil conformation.

It belongs to the enoyl-CoA hydratase/isomerase family.

The catalysed reaction is a (3S)-3-hydroxyacyl-CoA = a (2E)-enoyl-CoA + H2O. It catalyses the reaction a 4-saturated-(3S)-3-hydroxyacyl-CoA = a (3E)-enoyl-CoA + H2O. Its pathway is siderophore biosynthesis. In terms of biological role, enoyl-CoA isomerase/hydratase; part of the gene cluster that mediates the biosynthesis of siderophore ferrichrome A which is contributing to organismal virulence. The first step of ferrichrome A biosynthesis is performed by the HMG-CoA synthase hcs1 which catalyzes the generation of HMG-CoA and CoA using acetoacetyl-CoA and acetyl-CoA as substrates. The enoyl-CoA isomerase/hydratase fer4 then catalyzes the conversion of hcs1-produced HMG-CoA to methylglutaconyl-CoA. The acyltransferase fer5 then fuses the fer4-generated methylglutaconyl-CoA with sid1-generated hydroxyornithine to yield methylglutaconyl hydroxyornithine. Methylglutaconyl hydroxyornithine is then available for use by the NRPS fer3 to generate ferrichrome A. In Mycosarcoma maydis (Corn smut fungus), this protein is Enoyl-CoA isomerase/hydratase fer4.